A 346-amino-acid chain; its full sequence is Acetylpolyamine amidohydrolase 1 (346 aa).

H161 acts as the Proton donor/acceptor in catalysis. Zn(2+) is bound by residues D197, H199, and D286.

Belongs to the histone deacetylase family. As to quaternary structure, homodimer. Requires Zn(2+) as cofactor.

It catalyses the reaction N-acetylputrescine + H2O = putrescine + acetate. The enzyme catalyses N-acetylcadaverine + H2O = cadaverine + acetate. The catalysed reaction is N(1)-acetylspermine + H2O = spermine + acetate. It carries out the reaction N(1)-acetylspermidine + H2O = spermidine + acetate. It functions in the pathway amine and polyamine metabolism. Its function is as follows. Catalyzes the deacetylation of acetylated polyamines such as N-acetylputrescine, N-acetylcadaverine, N(1)-acetylspermine and N(1)-acetylspermidine. Plays an important role in the metabolism of acetylated polyamines in P.aeruginosa. Is involved in the degradation pathways of N-acetylputrescine and N-acetylcadaverine, that allow P.aeruginosa to utilize these acetylpolyamines as a carbon source under glucose starvation. In vitro, can also hydrolyze artificial trifluoroacetylated and acetylated lysine-derivatives. This chain is Acetylpolyamine amidohydrolase 1, found in Pseudomonas aeruginosa (strain ATCC 15692 / DSM 22644 / CIP 104116 / JCM 14847 / LMG 12228 / 1C / PRS 101 / PAO1).